The primary structure comprises 187 residues: Hypoxanthine/guanine phosphoribosyltransferase (187 aa).

This sequence belongs to the purine/pyrimidine phosphoribosyltransferase family. Archaeal HPRT subfamily. Homodimer.

The protein resides in the cytoplasm. It catalyses the reaction IMP + diphosphate = hypoxanthine + 5-phospho-alpha-D-ribose 1-diphosphate. It carries out the reaction GMP + diphosphate = guanine + 5-phospho-alpha-D-ribose 1-diphosphate. It functions in the pathway purine metabolism; IMP biosynthesis via salvage pathway; IMP from hypoxanthine: step 1/1. Catalyzes a salvage reaction resulting in the formation of IMP that is energically less costly than de novo synthesis. This is Hypoxanthine/guanine phosphoribosyltransferase from Methanopyrus kandleri (strain AV19 / DSM 6324 / JCM 9639 / NBRC 100938).